Here is a 467-residue protein sequence, read N- to C-terminus: Asparagine--tRNA ligase (467 aa).

This sequence belongs to the class-II aminoacyl-tRNA synthetase family. In terms of assembly, homodimer.

The protein localises to the cytoplasm. The enzyme catalyses tRNA(Asn) + L-asparagine + ATP = L-asparaginyl-tRNA(Asn) + AMP + diphosphate + H(+). This Actinobacillus pleuropneumoniae serotype 5b (strain L20) protein is Asparagine--tRNA ligase.